A 98-amino-acid polypeptide reads, in one-letter code: Keratin, high sulfur matrix protein, IIIB4 (98 aa).

The residue at position 1 (A1) is an N-acetylalanine.

Belongs to the KRTAP type 3 family. As to quaternary structure, interacts with wool keratins. In terms of tissue distribution, wool.

Its function is as follows. In the wool cortex, wool keratin intermediate filaments are embedded in an interfilamentous matrix, consisting of hair keratin-associated proteins (KRTAP), which are essential for the formation of a rigid and resistant wool shaft through their extensive disulfide bond cross-linking with abundant cysteine residues of wool keratins. The matrix proteins include the high-sulfur and high-glycine-tyrosine keratins. The protein is Keratin, high sulfur matrix protein, IIIB4 of Ovis aries (Sheep).